The sequence spans 595 residues: Aspartate--tRNA(Asp/Asn) ligase (595 aa).

Glu178 serves as a coordination point for L-aspartate. The tract at residues 202-205 is aspartate; sequence QLFK. Arg224 is an L-aspartate binding site. ATP contacts are provided by residues 224 to 226 and Gln233; that span reads RDE. His458 contributes to the L-aspartate binding site. ATP is bound at residue Glu488. Residue Arg495 coordinates L-aspartate. 540–543 contributes to the ATP binding site; it reads GLDR.

The protein belongs to the class-II aminoacyl-tRNA synthetase family. Type 1 subfamily. As to quaternary structure, homodimer.

It is found in the cytoplasm. It carries out the reaction tRNA(Asx) + L-aspartate + ATP = L-aspartyl-tRNA(Asx) + AMP + diphosphate. Functionally, aspartyl-tRNA synthetase with relaxed tRNA specificity since it is able to aspartylate not only its cognate tRNA(Asp) but also tRNA(Asn). Reaction proceeds in two steps: L-aspartate is first activated by ATP to form Asp-AMP and then transferred to the acceptor end of tRNA(Asp/Asn). This chain is Aspartate--tRNA(Asp/Asn) ligase, found in Trichodesmium erythraeum (strain IMS101).